A 1238-amino-acid chain; its full sequence is Virulence sensor protein BvgS (1238 aa).

A signal peptide spans 1-32 (MPAPHRLYPRSLICLAQALLAWALLAWAPAQA). At 33–307 (SQELTLVGKA…REQQWMADHP (275 aa)) the chain is on the cytoplasmic side. The helical transmembrane segment at 308–331 (VVKVAVLNLFAPFTLFRTDEQFGG) threads the bilayer. The Periplasmic segment spans residues 332–541 (ISAAVLQLLQ…PRTWYAYRNE (210 aa)). A helical transmembrane segment spans residues 542-563 (IYLLIGLGLLSALLFLSWIVYL). The Cytoplasmic segment spans residues 564–1238 (RRQIRQRKRA…LEQRPHQDQP (675 aa)). The PAS domain occupies 580-651 (QLEFMRVLID…MHEFLLTRVA (72 aa)). A PAC domain is found at 652-708 (AEREPRFEDRDVTLHGRTRHVYQWTIPYGDSLGELKGIIGGWIDITERAELLRKLHD). Positions 726–948 (TMSHEIRTPM…TVSVDLRLTM (223 aa)) constitute a Histidine kinase domain. His729 carries the post-translational modification Phosphohistidine; by autocatalysis. Positions 974 to 1095 (RVLVVDDHKP…ALRQRLNEAV (122 aa)) constitute a Response regulatory domain. Asp1023 is subject to 4-aspartylphosphate. The region spanning 1133-1228 (DEALIRQLLE…AALETQLRAW (96 aa)) is the HPt domain. His1172 bears the Phosphohistidine mark.

Post-translationally, activation requires a sequential transfer of a phosphate group from a His in the primary transmitter domain, to an Asp in the receiver domain and to a His in the secondary transmitter domain.

It localises to the cell inner membrane. It catalyses the reaction ATP + protein L-histidine = ADP + protein N-phospho-L-histidine.. In terms of biological role, member of the two-component regulatory system BvgS/BvgA. Phosphorylates BvgA via a four-step phosphorelay in response to environmental signals. The chain is Virulence sensor protein BvgS (bvgS) from Bordetella pertussis (strain Tohama I / ATCC BAA-589 / NCTC 13251).